Here is a 952-residue protein sequence, read N- to C-terminus: G patch domain-containing protein 1 homolog (952 aa).

6 disordered regions span residues 104–127 (QGIR…QRRR), 165–233 (GWKP…DDYE), 320–345 (DKKP…EDNS), 370–432 (RSRF…KDHS), 660–711 (PEKV…RNKP), and 822–952 (VAPE…KSKH). Positions 107–123 (RTRDEFANEDEQKQRSD) are enriched in basic and acidic residues. The region spanning 153-199 (RDKVAVRILKSMGWKPGQGVGPRQTRKEKRQATARNSKEQYLMEHYG) is the G-patch domain. The span at 214-233 (DSNNEDEDDEDITFAPDDYE) shows a compositional bias: acidic residues. Positions 323 to 333 (PKQKKQQHVQQ) are enriched in basic residues. Composition is skewed to basic and acidic residues over residues 375–402 (PMDK…DLNP), 414–432 (QEEK…KDHS), and 679–691 (IQDK…EPSK). The segment covering 886–896 (ASSSNESSSSD) has biased composition (low complexity). Composition is skewed to basic residues over residues 906–934 (KLSK…KKSK) and 941–952 (HKAKKKKKKSKH).

The protein belongs to the GPATCH1 family.

This Drosophila melanogaster (Fruit fly) protein is G patch domain-containing protein 1 homolog.